The chain runs to 839 residues: LPS-assembly protein LptD (839 aa).

The signal sequence occupies residues Met-1 to Ser-21.

It belongs to the LptD family. In terms of assembly, component of the lipopolysaccharide transport and assembly complex. Interacts with LptE and LptA.

The protein localises to the cell outer membrane. Its function is as follows. Together with LptE, is involved in the assembly of lipopolysaccharide (LPS) at the surface of the outer membrane. The protein is LPS-assembly protein LptD of Legionella pneumophila (strain Lens).